Here is a 1260-residue protein sequence, read N- to C-terminus: Ankyrin repeat and sterile alpha motif domain-containing protein 1B (1260 aa).

ANK repeat units follow at residues 2 to 31, 58 to 87, 91 to 120, 127 to 156, 160 to 189, 193 to 222, and 225 to 254; these read GKDQ…GGIL, SGYT…STNV, KGYF…SHSR, ENET…DPTI, KLET…NLMS, RKHT…DVSC, and EKGS…DANI. A disordered region spans residues 298-326; it reads HAQEDTAQETRLSSPAQSPSQKTKSETVT. Residues 306-326 are compositionally biased toward polar residues; sequence ETRLSSPAQSPSQKTKSETVT. Phosphoserine occurs at positions 310, 311, 315, 354, and 365. Disordered stretches follow at residues 368–402, 491–513, and 556–642; these read ELGK…SCGP, PGTG…PSPD, and GCTS…EASL. Polar residues predominate over residues 372–385; that stretch reads NGSQSVRTSSTINL. Thr504 is subject to Phosphothreonine. Ser508 and Ser511 each carry phosphoserine. Positions 556–575 are enriched in low complexity; sequence GCTSFTSSPPVSPPTSSVET. Basic and acidic residues predominate over residues 576 to 588; sequence TEIKNEGAEHTDD. Position 739 is a phosphoserine (Ser739). The segment at 754 to 778 is disordered; that stretch reads VNWSKSSTAERSSKDNSERTPSFTS. At Thr773 the chain carries Phosphothreonine. Ser775 is subject to Phosphoserine. SAM domains lie at 810 to 876 and 884 to 949; these read CPVQ…LPKM and YHPT…RLHE. Tyr901 carries the post-translational modification Phosphotyrosine. The Nuclear localization signal motif lies at 935–938; it reads HRKR. The interval 946–989 is disordered; that stretch reads RLHEDPPQKPPRSITLREPSGNHTPPQLSPSLSQSTYTTGGSLD. The segment covering 969–984 has biased composition (low complexity); the sequence is TPPQLSPSLSQSTYTT. Ser974 is modified (phosphoserine). Residue Tyr1007 is modified to Phosphotyrosine. A PID domain is found at 1056-1213; it reads IFQSCDYKAF…SFENKPSKPI (158 aa). Positions 1197–1217 are disordered; sequence HSSTLPESFENKPSKPIPKPR.

In terms of assembly, interacts with EPHA8. Isoform 2 interacts with COIL. Isoform 3 interacts with DLG4. Nuclear translocation of isoform 3 requires an NMDAR-dependent proteolytic cleavage. A 35 kDa N-terminal form shuttles to the nucleus. In terms of tissue distribution, isoform 3 is brain specific and highly enriched in the postsynaptic densities (PSDs), especially in cortical, striatal and hippocampal PSDs.

The protein localises to the cytoplasm. It localises to the nucleus. Its subcellular location is the postsynaptic density. The protein resides in the cell projection. It is found in the dendritic spine. The protein localises to the cajal body. In terms of biological role, isoform 2 may participate in the regulation of nucleoplasmic coilin protein interactions in neuronal and transformed cells. Isoform 3 can regulate global protein synthesis by altering nucleolar numbers. This is Ankyrin repeat and sterile alpha motif domain-containing protein 1B (Anks1b) from Rattus norvegicus (Rat).